Consider the following 186-residue polypeptide: Dynactin subunit 3 (186 aa).

N-acetylalanine is present on alanine 2. Residues 135-157 (QQQDQCVEITEESKALLEEYNKT) are a coiled coil.

It belongs to the dynactin subunit 3 family. As to quaternary structure, subunit of dynactin, a multiprotein complex part of a tripartite complex with dynein and a adapter, such as BICDL1, BICD2 or HOOK3. The dynactin complex is built around ACTR1A/ACTB filament and consists of an actin-related filament composed of a shoulder domain, a pointed end and a barbed end. Its length is defined by its flexible shoulder domain. The soulder is composed of 2 DCTN1 subunits, 4 DCTN2 and 2 DCTN3. The 4 DCNT2 (via N-terminus) bind the ACTR1A filament and act as molecular rulers to determine the length. The pointed end is important for binding dynein-dynactin cargo adapters. Consists of 4 subunits: ACTR10, DCNT4, DCTN5 and DCTN6. The barbed end is composed of a CAPZA1:CAPZB heterodimers, which binds ACTR1A/ACTB filament and dynactin and stabilizes dynactin.

The protein localises to the cytoplasm. It localises to the cytoskeleton. It is found in the microtubule organizing center. The protein resides in the centrosome. Its subcellular location is the chromosome. The protein localises to the centromere. It localises to the kinetochore. It is found in the spindle. The protein resides in the cleavage furrow. Its subcellular location is the midbody. Part of the dynactin complex that activates the molecular motor dynein for ultra-processive transport along microtubules. Together with dynein may be involved in spindle assembly and cytokinesis. This chain is Dynactin subunit 3 (DCTN3), found in Bos taurus (Bovine).